A 221-amino-acid chain; its full sequence is Membrane protein 0 (221 aa).

Positions 1–22 are disordered; that stretch reads MATVHYSRRPGTPPVTLTSSPG. The PPXY motif signature appears at 44–47; the sequence is PPPY. A helical transmembrane segment spans residues 100 to 120; that stretch reads FLILFGILTLTAVVVAIVAVF.

It belongs to the varicellovirus ORF0 protein family. Interacts with host ITCH; this interaction probably mediates ITCH degradation.

Its subcellular location is the host Golgi apparatus membrane. The polypeptide is Membrane protein 0 (Homo sapiens (Human)).